The sequence spans 363 residues: tRNA dimethylallyltransferase (363 aa).

65–72 (GPTASGKS) serves as a coordination point for ATP. Substrate is bound at residue 67-72 (TASGKS). Interaction with substrate tRNA stretches follow at residues 90–93 (DSMQ) and 214–218 (QRLIR).

The protein belongs to the IPP transferase family. As to quaternary structure, monomer. Mg(2+) serves as cofactor.

It carries out the reaction adenosine(37) in tRNA + dimethylallyl diphosphate = N(6)-dimethylallyladenosine(37) in tRNA + diphosphate. In terms of biological role, catalyzes the transfer of a dimethylallyl group onto the adenine at position 37 in tRNAs that read codons beginning with uridine, leading to the formation of N6-(dimethylallyl)adenosine (i(6)A). The chain is tRNA dimethylallyltransferase from Rickettsia rickettsii (strain Sheila Smith).